Consider the following 136-residue polypeptide: Transport protein particle 20 kDa subunit (136 aa).

The protein belongs to the TRAPP small subunits family. Sedlin subfamily.

It is found in the cytoplasm. Its subcellular location is the golgi apparatus. It localises to the cis-Golgi network. The protein resides in the endoplasmic reticulum. Its function is as follows. Component of the TRAPP I and TRAPP II complexes. TRAPP I plays a key role in the late stages of endoplasmic reticulum to Golgi traffic. TRAPP II seems to play a role in intra-Golgi transport. The protein is Transport protein particle 20 kDa subunit (trs20) of Schizosaccharomyces pombe (strain 972 / ATCC 24843) (Fission yeast).